The chain runs to 353 residues: Small ribosomal subunit biogenesis GTPase RsgA (353 aa).

A compositionally biased stretch (polar residues) spans 1–17 (MSKNKLSKGQQRRVNAN). Residues 1–25 (MSKNKLSKGQQRRVNANHQRRLKTT) form a disordered region. A CP-type G domain is found at 104–274 (ASVLTRPDFY…VIDSPGVREF (171 aa)). Residues 160-163 (NKID) and 214-222 (GQSGVGKSS) contribute to the GTP site. The Zn(2+) site is built by Cys298, Cys303, His305, and Cys311.

The protein belongs to the TRAFAC class YlqF/YawG GTPase family. RsgA subfamily. As to quaternary structure, monomer. Associates with 30S ribosomal subunit, binds 16S rRNA. Requires Zn(2+) as cofactor.

It is found in the cytoplasm. Its function is as follows. One of several proteins that assist in the late maturation steps of the functional core of the 30S ribosomal subunit. Helps release RbfA from mature subunits. May play a role in the assembly of ribosomal proteins into the subunit. Circularly permuted GTPase that catalyzes slow GTP hydrolysis, GTPase activity is stimulated by the 30S ribosomal subunit. In Klebsiella pneumoniae (strain 342), this protein is Small ribosomal subunit biogenesis GTPase RsgA.